Consider the following 565-residue polypeptide: Atlastin-2 (565 aa).

The Cytoplasmic segment spans residues 1–458 (MVLKKGVKFF…NIFYAARTPA (458 aa)). The region spanning 73-318 (DLNIVVVSVA…LVPLLLAPEN (246 aa)) is the GB1/RHD3-type G domain. Positions 86, 87, 88, 89, 90, 91, 157, 226, and 227 each coordinate GDP. Residues R86, K87, G88, K89, S90, and F91 each coordinate GTP. Residue S90 participates in Mg(2+) binding. GTP contacts are provided by R226 and D227. The stretch at 238 to 266 (LEGGKQFLEKRLQVKKNQHEELQNVRKHI) forms a coiled coil. K252 bears the N6-methyllysine mark. Residues V285 and N288 each contribute to the GDP site. V285 is a GTP binding site. The 3HB (three-helix bundle) domain stretch occupies residues 356 to 447 (MLQATAEANN…YANFIKHNDG (92 aa)). Residues 448–456 (KNIFYAART) form a linker region. The helical transmembrane segment at 459-479 (TLFAVMFAMYIISGLTGFIGL) threads the bilayer. Residues 480–481 (NS) are Lumenal-facing. The chain crosses the membrane as a helical span at residues 482-502 (IAVLCNLVMGLALTFLCTWAY). Topologically, residues 503–565 (VKYSGEFREI…VSHHARLKTD (63 aa)) are cytoplasmic. The autoinhibitory domain stretch occupies residues 529–565 (KPLGDNLMEENIRQSVTNSIKAGLTDQVSHHARLKTD).

The protein belongs to the TRAFAC class dynamin-like GTPase superfamily. GB1/RHD3 GTPase family. GB1 subfamily. As to quaternary structure, monomeric and homodimeric. The homodimer, transiently formed by two molecules on opposing membranes, is the active form mediating ER membrane fusion. Interacts with REEP5 and RTN3; these proteins are involved in endoplasmic reticulum tubular network organization. Interacts with ZFYVE27; both proteins are involved in endoplasmic reticulum tubular network organization.

It is found in the endoplasmic reticulum membrane. It carries out the reaction GTP + H2O = GDP + phosphate + H(+). Functionally, atlastin-2 (ATL2) is a membrane-anchored GTPase that mediates the GTP-dependent fusion of endoplasmic reticulum (ER) membranes, maintaining the continuous ER network. It facilitates the formation of three-way junctions where ER tubules intersect. Two atlastin-2 on neighboring ER tubules bind GTP and form loose homodimers through the GB1/RHD3-type G domains and 3HB regions. Upon GTP hydrolysis, the 3HB regions tighten, pulling the membranes together to drive their fusion. After fusion, the homodimer disassembles upon release of inorganic phosphate (Pi). Subsequently, GDP dissociates, resetting the monomers to a conformation ready for a new fusion cycle. The chain is Atlastin-2 from Macaca fascicularis (Crab-eating macaque).